Reading from the N-terminus, the 245-residue chain is Adenosylcobinamide-GDP ribazoletransferase (245 aa).

The next 6 helical transmembrane spans lie at Trp35–Leu55, Ile108–His128, Gly137–Val157, Ile176–Met196, Thr197–Arg217, and Ile222–Ala242.

This sequence belongs to the CobS family. Requires Mg(2+) as cofactor.

The protein resides in the cell inner membrane. The catalysed reaction is alpha-ribazole + adenosylcob(III)inamide-GDP = adenosylcob(III)alamin + GMP + H(+). It carries out the reaction alpha-ribazole 5'-phosphate + adenosylcob(III)inamide-GDP = adenosylcob(III)alamin 5'-phosphate + GMP + H(+). Its pathway is cofactor biosynthesis; adenosylcobalamin biosynthesis; adenosylcobalamin from cob(II)yrinate a,c-diamide: step 7/7. Functionally, joins adenosylcobinamide-GDP and alpha-ribazole to generate adenosylcobalamin (Ado-cobalamin). Also synthesizes adenosylcobalamin 5'-phosphate from adenosylcobinamide-GDP and alpha-ribazole 5'-phosphate. The sequence is that of Adenosylcobinamide-GDP ribazoletransferase from Nitratidesulfovibrio vulgaris (strain DP4) (Desulfovibrio vulgaris).